We begin with the raw amino-acid sequence, 148 residues long: Large ribosomal subunit protein uL15 (148 aa).

The tract at residues Met-1–Leu-61 is disordered. Basic residues predominate over residues Thr-30–Lys-39.

This sequence belongs to the universal ribosomal protein uL15 family. In terms of assembly, part of the 50S ribosomal subunit.

Functionally, binds to the 23S rRNA. In Geobacter sulfurreducens (strain ATCC 51573 / DSM 12127 / PCA), this protein is Large ribosomal subunit protein uL15.